The sequence spans 339 residues: Phosphate acyltransferase (339 aa).

Belongs to the PlsX family. In terms of assembly, homodimer. Probably interacts with PlsY.

It localises to the cytoplasm. The enzyme catalyses a fatty acyl-[ACP] + phosphate = an acyl phosphate + holo-[ACP]. The protein operates within lipid metabolism; phospholipid metabolism. Functionally, catalyzes the reversible formation of acyl-phosphate (acyl-PO(4)) from acyl-[acyl-carrier-protein] (acyl-ACP). This enzyme utilizes acyl-ACP as fatty acyl donor, but not acyl-CoA. The protein is Phosphate acyltransferase of Helicobacter pylori (strain Shi470).